A 524-amino-acid polypeptide reads, in one-letter code: 2,3-bisphosphoglycerate-independent phosphoglycerate mutase (524 aa).

Mn(2+) contacts are provided by Asp13 and Ser63. The active-site Phosphoserine intermediate is Ser63. Residues His124, 154–155 (RD), Arg186, Arg192, 262–265 (RADR), and Lys337 each bind substrate. 5 residues coordinate Mn(2+): Asp404, His408, Asp445, His446, and His464.

It belongs to the BPG-independent phosphoglycerate mutase family. In terms of assembly, monomer. It depends on Mn(2+) as a cofactor.

It catalyses the reaction (2R)-2-phosphoglycerate = (2R)-3-phosphoglycerate. It participates in carbohydrate degradation; glycolysis; pyruvate from D-glyceraldehyde 3-phosphate: step 3/5. Catalyzes the interconversion of 2-phosphoglycerate and 3-phosphoglycerate. In Thermomicrobium roseum (strain ATCC 27502 / DSM 5159 / P-2), this protein is 2,3-bisphosphoglycerate-independent phosphoglycerate mutase.